The sequence spans 206 residues: 3-isopropylmalate dehydratase small subunit (206 aa).

It belongs to the LeuD family. LeuD type 1 subfamily. In terms of assembly, heterodimer of LeuC and LeuD.

It catalyses the reaction (2R,3S)-3-isopropylmalate = (2S)-2-isopropylmalate. It functions in the pathway amino-acid biosynthesis; L-leucine biosynthesis; L-leucine from 3-methyl-2-oxobutanoate: step 2/4. Its function is as follows. Catalyzes the isomerization between 2-isopropylmalate and 3-isopropylmalate, via the formation of 2-isopropylmaleate. This chain is 3-isopropylmalate dehydratase small subunit, found in Leptospira borgpetersenii serovar Hardjo-bovis (strain L550).